Here is a 203-residue protein sequence, read N- to C-terminus: Secreted phosphoprotein 24 (203 aa).

The N-terminal stretch at 1 to 23 (MEKMAMKMLVIFVLGMNHWTCTG) is a signal peptide. 2 disulfides stabilise this stretch: cysteine 86–cysteine 97 and cysteine 110–cysteine 128. Position 90 is a phosphoserine (serine 90). A phosphoserine mark is found at serine 138, serine 139, serine 166, and serine 175.

It belongs to the SPP2 family. In terms of processing, multiply phosphorylated at serine residues in Ser-X-Glu/Ser(P) sequences, a recognition motif for phosphorylation by secretory pathway protein kinase. Phosphorylation sites are present in the extracellular medium. As to expression, in liver and bone but not in heart, lung, kidney, or spleen.

It localises to the secreted. Its function is as follows. Could coordinate an aspect of bone turnover. In Bos taurus (Bovine), this protein is Secreted phosphoprotein 24 (SPP2).